A 227-amino-acid chain; its full sequence is Large ribosomal subunit protein uL3 (227 aa).

Residues 146 to 167 (RGPMAHGSKFHRHQGSNGACSS) form a disordered region.

Belongs to the universal ribosomal protein uL3 family. As to quaternary structure, part of the 50S ribosomal subunit. Forms a cluster with proteins L14 and L19.

Functionally, one of the primary rRNA binding proteins, it binds directly near the 3'-end of the 23S rRNA, where it nucleates assembly of the 50S subunit. The protein is Large ribosomal subunit protein uL3 of Agathobacter rectalis (strain ATCC 33656 / DSM 3377 / JCM 17463 / KCTC 5835 / VPI 0990) (Eubacterium rectale).